A 1229-amino-acid chain; its full sequence is Alpha,alpha-trehalose-phosphate synthase [UDP-forming] 2 (1229 aa).

The interval 196–233 (VSSDSEGEEAIHNVRSGTHTESESEEDPKAPRSGLATS) is disordered. Residues 213 to 225 (THTESESEEDPKA) show a composition bias toward basic and acidic residues.

It in the N-terminal section; belongs to the glycosyltransferase 20 family. The protein in the C-terminal section; belongs to the gob-1 trehalose phosphatase family.

It carries out the reaction D-glucose 6-phosphate + UDP-alpha-D-glucose = alpha,alpha-trehalose 6-phosphate + UDP + H(+). In terms of biological role, catalyzes the production of trehalose from glucose-6-phosphate and UDP-alpha-D-glucose in a 2 step process. The protein is Alpha,alpha-trehalose-phosphate synthase [UDP-forming] 2 (tps-2) of Caenorhabditis elegans.